A 102-amino-acid polypeptide reads, in one-letter code: ATP-dependent Clp protease adapter protein ClpS (102 aa).

It belongs to the ClpS family. As to quaternary structure, binds to the N-terminal domain of the chaperone ClpA.

Its function is as follows. Involved in the modulation of the specificity of the ClpAP-mediated ATP-dependent protein degradation. The chain is ATP-dependent Clp protease adapter protein ClpS from Shewanella baltica (strain OS155 / ATCC BAA-1091).